Consider the following 351-residue polypeptide: Calcium release-activated calcium channel protein 1 (351 aa).

Residues 1–21 (MSVWTTANNSGLETPTKSPIT) show a composition bias toward polar residues. Disordered regions lie at residues 1–39 (MSVWTTANNSGLETPTKSPITSSVPRAARSSAVITTGNH) and 71–141 (HAHP…EDLH). At 1–163 (MSVWTTANNS…SRAKLKASSK (163 aa)) the chain is on the cytoplasmic side. 2 stretches are compositionally biased toward low complexity: residues 22-33 (SSVPRAARSSAV) and 80-93 (SNSPTGSGSNSNNS). Residues 94–106 (AGFQRTSISNSLL) are compositionally biased toward polar residues. A helical membrane pass occupies residues 164–181 (TSALLSGFAMVAMVEVQL). Residues 182 to 191 (DHDTNVPPGM) are Extracellular-facing. The chain crosses the membrane as a helical span at residues 192–212 (LIAFAICTTLLVAVHMLALMI). Residues 213-248 (STCILPNIETVCNLHSISLVHESPHERLHWYIETAW) are Cytoplasmic-facing. Residues 249 to 269 (AFSTLLGLILFLLEIAILCWV) traverse the membrane as a helical segment. Residues 270-277 (KFYDLSPP) lie on the Extracellular side of the membrane. A helical transmembrane segment spans residues 278–298 (AAWSACVVLIPVMIIFMAFAI). Over 299-351 (HFYRSLVSHKYEVTVSGIRELEMLKEQMEQDHLEHHNNIRNNGMNYGASGDIV) the chain is Cytoplasmic.

It belongs to the Orai family. In terms of assembly, hexamer.

Its subcellular location is the cell membrane. The catalysed reaction is Ca(2+)(in) = Ca(2+)(out). Functionally, pore-forming subunit of inward rectifying Ca(2+) release-activated Ca(2+) (CRAC) channels. Assembles in hexameric CRAC channels that mediate Ca(2+) influx upon depletion of endoplasmic reticulum Ca(2+) store and channel activation by Ca(2+) sensor Stim, a process known as store-operated Ca(2+) entry (SOCE). Regulates transcription factor NFAT nuclear import. In Drosophila melanogaster (Fruit fly), this protein is Calcium release-activated calcium channel protein 1.